We begin with the raw amino-acid sequence, 447 residues long: Methionine aminopeptidase 2-2 (447 aa).

The segment at 1 to 89 is disordered; it reads MAAQTAPELA…PRIPLTTLFP (89 aa). Polar residues predominate over residues 15-30; it reads NKNSGSAEANVVSNGG. Over residues 34 to 47 the composition is skewed to acidic residues; the sequence is DDAENEGDSDDDKD. The segment covering 59 to 73 has biased composition (basic residues); that stretch reads KKKKKKRSKKKKKAA. His197 is a substrate binding site. Residues Asp217, Asp228, and His297 each coordinate a divalent metal cation. Substrate is bound at residue His305. The a divalent metal cation site is built by Glu333 and Glu428.

This sequence belongs to the peptidase M24A family. Methionine aminopeptidase eukaryotic type 2 subfamily. The cofactor is Co(2+). Zn(2+) is required as a cofactor. It depends on Mn(2+) as a cofactor. Requires Fe(2+) as cofactor.

The protein localises to the cytoplasm. The catalysed reaction is Release of N-terminal amino acids, preferentially methionine, from peptides and arylamides.. Functionally, cotranslationally removes the N-terminal methionine from nascent proteins. The N-terminal methionine is often cleaved when the second residue in the primary sequence is small and uncharged (Met-Ala-, Cys, Gly, Pro, Ser, Thr, or Val). The protein is Methionine aminopeptidase 2-2 of Arthroderma otae (strain ATCC MYA-4605 / CBS 113480) (Microsporum canis).